A 381-amino-acid polypeptide reads, in one-letter code: Prostatic acid phosphatase (381 aa).

An N-terminal signal peptide occupies residues 1-31 (MRAVPLHLVGTASLTLGFLLLLSLRLDPGQA). Residue Arg42 participates in substrate binding. His43 serves as the catalytic Nucleophile. Arg46 lines the substrate pocket. Asn93 is a glycosylation site (N-linked (GlcNAc...) asparagine). Residue Arg110 participates in substrate binding. 3 cysteine pairs are disulfide-bonded: Cys160/Cys371, Cys214/Cys312, and Cys346/Cys350. N-linked (GlcNAc...) asparagine glycosylation is present at Asn219. His288 contributes to the substrate binding site. Asp289 functions as the Proton donor in the catalytic mechanism. An N-linked (GlcNAc...) asparagine glycan is attached at Asn332.

This sequence belongs to the histidine acid phosphatase family. In terms of assembly, homodimer; dimer formation is required for phosphatase activity. Post-translationally, N-glycosylated. Expressed in prostate epithelium. Also expressed in the pelvic nerve and sacral spinal cord. Localizes in peptidergic and non-peptidergic nociceptive (pain-sensing) neurons.

It is found in the secreted. It localises to the cell membrane. The protein resides in the lysosome membrane. It carries out the reaction a phosphate monoester + H2O = an alcohol + phosphate. It catalyses the reaction a ribonucleoside 5'-phosphate + H2O = a ribonucleoside + phosphate. The enzyme catalyses 1-(9Z-octadecenoyl)-sn-glycero-3-phosphate + H2O = 1-(9Z-octadecenoyl)-sn-glycerol + phosphate. The catalysed reaction is O-phospho-L-tyrosyl-[protein] + H2O = L-tyrosyl-[protein] + phosphate. Its activity is regulated as follows. Inhibited by L(+)-tartrate. Functionally, a non-specific tyrosine phosphatase that dephosphorylates a diverse number of substrates under acidic conditions (pH 4-6) including alkyl, aryl, and acyl orthophosphate monoesters and phosphorylated proteins. Has lipid phosphatase activity and inactivates lysophosphatidic acid in seminal plasma. In terms of biological role, in addition to its tyrosine phosphatase activity, also has ecto-5'-nucleotidase activity in dorsal root ganglion (DRG) neurons. Generates adenosine from AMP. This extracellular adenosine leads to a decrease in chronic pain by activating A1R in nociceptive neurons. The polypeptide is Prostatic acid phosphatase (Acp3) (Rattus norvegicus (Rat)).